A 334-amino-acid chain; its full sequence is Malate dehydrogenase, cytoplasmic (334 aa).

Ser-2 is modified (N-acetylserine). NAD(+) is bound by residues 11–17 and Asp-42; that span reads GAAGQIA. The substrate site is built by Arg-92 and Arg-98. Asn-105 contributes to the NAD(+) binding site. At Lys-110 the chain carries N6-succinyllysine. Residue Gln-112 participates in NAD(+) binding. N6-acetyllysine is present on residues Lys-118 and Lys-121. 129–131 provides a ligand contact to NAD(+); that stretch reads VGN. Substrate is bound by residues Asn-131 and Arg-162. His-187 serves as the catalytic Proton acceptor. The residue at position 214 (Lys-214) is an N6-succinyllysine. The residue at position 217 (Ser-217) is a Phosphoserine. Position 230 is an omega-N-methylarginine (Arg-230). The residue at position 241 (Ser-241) is a Phosphoserine. Residue Lys-298 is modified to N6-acetyllysine; alternate. Position 298 is an N6-succinyllysine; alternate (Lys-298). Ser-309 bears the Phosphoserine mark. The residue at position 318 (Lys-318) is an N6-succinyllysine. Phosphoserine is present on residues Ser-332 and Ser-333.

The protein belongs to the LDH/MDH superfamily. MDH type 2 family. As to quaternary structure, homodimer. In terms of processing, ISGylated. Post-translationally, acetylation at Lys-118 dramatically enhances enzymatic activity and promotes adipogenic differentiation.

The protein localises to the cytoplasm. It is found in the cytosol. The enzyme catalyses (S)-malate + NAD(+) = oxaloacetate + NADH + H(+). The catalysed reaction is (2R)-2-hydroxy-3-(4-hydroxyphenyl)propanoate + NAD(+) = 3-(4-hydroxyphenyl)pyruvate + NADH + H(+). It catalyses the reaction (S)-2-hydroxyglutarate + NAD(+) = 2-oxoglutarate + NADH + H(+). Catalyzes the reduction of aromatic alpha-keto acids in the presence of NADH. Plays essential roles in the malate-aspartate shuttle and the tricarboxylic acid cycle, important in mitochondrial NADH supply for oxidative phosphorylation. Catalyzes the reduction of 2-oxoglutarate to 2-hydroxyglutarate, leading to elevated reactive oxygen species (ROS). This chain is Malate dehydrogenase, cytoplasmic (MDH1), found in Felis catus (Cat).